The sequence spans 177 residues: Large ribosomal subunit protein uL6 (177 aa).

Belongs to the universal ribosomal protein uL6 family. As to quaternary structure, part of the 50S ribosomal subunit.

This protein binds to the 23S rRNA, and is important in its secondary structure. It is located near the subunit interface in the base of the L7/L12 stalk, and near the tRNA binding site of the peptidyltransferase center. This chain is Large ribosomal subunit protein uL6, found in Cronobacter sakazakii (strain ATCC BAA-894) (Enterobacter sakazakii).